Reading from the N-terminus, the 86-residue chain is Protein Tat (86 aa).

Residues 1 to 24 (MDPVDPNQEPWNHPGSQPRTACNN) are interaction with human CREBBP. The interval 1-48 (MDPVDPNQEPWNHPGSQPRTACNNCYCKKCCYHCQLCFLKKGLGIYYG) is transactivation. 3 residues coordinate Zn(2+): Cys-22, Cys-25, and Cys-27. The interval 22 to 37 (CNNCYCKKCCYHCQLC) is cysteine-rich. N6-acetyllysine; by host PCAF is present on Lys-28. Zn(2+)-binding residues include Cys-30, His-33, Cys-34, and Cys-37. The core stretch occupies residues 38 to 48 (FLKKGLGIYYG). Residues 48-58 (GRKKRRQRRGT) show a composition bias toward basic residues. A disordered region spans residues 48 to 86 (GRKKRRQRRGTPKSLQDHQTLIPKQPLSRTSGDPTGPEK). The Nuclear localization signal, RNA-binding (TAR), and protein transduction motif lies at 49-57 (RKKRRQRRG). The segment at 49 to 86 (RKKRRQRRGTPKSLQDHQTLIPKQPLSRTSGDPTGPEK) is interaction with the host capping enzyme RNGTT. An N6-acetyllysine; by host EP300 and GCN5L2 mark is found at Lys-50 and Lys-51. Asymmetric dimethylarginine; by host PRMT6 is present on residues Arg-52 and Arg-53. Lys-71 participates in a covalent cross-link: Glycyl lysine isopeptide (Lys-Gly) (interchain with G-Cter in ubiquitin).

It belongs to the lentiviruses Tat family. As to quaternary structure, interacts with host CCNT1. Associates with the P-TEFb complex composed at least of Tat, P-TEFb (CDK9 and CCNT1), TAR RNA, RNA Pol II. Recruits the HATs CREBBP, TAF1/TFIID, EP300, PCAF and GCN5L2. Interacts with host KAT5/Tip60; this interaction targets the latter to degradation. Interacts with the host deacetylase SIRT1. Interacts with host capping enzyme RNGTT; this interaction stimulates RNGTT. Binds to host KDR, and to the host integrins ITGAV/ITGB3 and ITGA5/ITGB1. Interacts with host KPNB1/importin beta-1 without previous binding to KPNA1/importin alpha-1. Interacts with EIF2AK2. Interacts with host nucleosome assembly protein NAP1L1; this interaction may be required for the transport of Tat within the nucleus, since the two proteins interact at the nuclear rim. Interacts with host C1QBP/SF2P32; this interaction involves lysine-acetylated Tat. Interacts with the host chemokine receptors CCR2, CCR3 and CXCR4. Interacts with host DPP4/CD26; this interaction may trigger an anti-proliferative effect. Interacts with host LDLR. Interacts with the host extracellular matrix metalloproteinase MMP1. Interacts with host PRMT6; this interaction mediates Tat's methylation. Interacts with, and is ubiquitinated by MDM2/Hdm2. Interacts with host PSMC3 and HTATIP2. Interacts with STAB1; this interaction may overcome SATB1-mediated repression of IL2 and IL2RA (interleukin) in T cells by binding to the same domain than HDAC1. Interacts (when acetylated) with human CDK13, thereby increasing HIV-1 mRNA splicing and promoting the production of the doubly spliced HIV-1 protein Nef. Interacts with host TBP; this interaction modulates the activity of transcriptional pre-initiation complex. Interacts with host RELA. Interacts with host PLSCR1; this interaction negatively regulates Tat transactivation activity by altering its subcellular distribution. Asymmetrical arginine methylation by host PRMT6 seems to diminish the transactivation capacity of Tat and affects the interaction with host CCNT1. In terms of processing, acetylation by EP300, CREBBP, GCN5L2/GCN5 and PCAF regulates the transactivation activity of Tat. EP300-mediated acetylation of Lys-50 promotes dissociation of Tat from the TAR RNA through the competitive binding to PCAF's bromodomain. In addition, the non-acetylated Tat's N-terminus can also interact with PCAF. PCAF-mediated acetylation of Lys-28 enhances Tat's binding to CCNT1. Lys-50 is deacetylated by SIRT1. Post-translationally, polyubiquitination by host MDM2 does not target Tat to degradation, but activates its transactivation function and fosters interaction with CCNT1 and TAR RNA. Phosphorylated by EIF2AK2 on serine and threonine residues adjacent to the basic region important for TAR RNA binding and function. Phosphorylation of Tat by EIF2AK2 is dependent on the prior activation of EIF2AK2 by dsRNA.

Its subcellular location is the host nucleus. It is found in the host nucleolus. The protein localises to the host cytoplasm. It localises to the secreted. Its function is as follows. Transcriptional activator that increases RNA Pol II processivity, thereby increasing the level of full-length viral transcripts. Recognizes a hairpin structure at the 5'-LTR of the nascent viral mRNAs referred to as the transactivation responsive RNA element (TAR) and recruits the cyclin T1-CDK9 complex (P-TEFb complex) that will in turn hyperphosphorylate the RNA polymerase II to allow efficient elongation. The CDK9 component of P-TEFb and other Tat-activated kinases hyperphosphorylate the C-terminus of RNA Pol II that becomes stabilized and much more processive. Other factors such as HTATSF1/Tat-SF1, SUPT5H/SPT5, and HTATIP2 are also important for Tat's function. Besides its effect on RNA Pol II processivity, Tat induces chromatin remodeling of proviral genes by recruiting the histone acetyltransferases (HATs) CREBBP, EP300 and PCAF to the chromatin. This also contributes to the increase in proviral transcription rate, especially when the provirus integrates in transcriptionally silent region of the host genome. To ensure maximal activation of the LTR, Tat mediates nuclear translocation of NF-kappa-B by interacting with host RELA. Through its interaction with host TBP, Tat may also modulate transcription initiation. Tat can reactivate a latently infected cell by penetrating in it and transactivating its LTR promoter. In the cytoplasm, Tat is thought to act as a translational activator of HIV-1 mRNAs. In terms of biological role, extracellular circulating Tat can be endocytosed by surrounding uninfected cells via the binding to several surface receptors such as CD26, CXCR4, heparan sulfate proteoglycans (HSPG) or LDLR. Neurons are rarely infected, but they internalize Tat via their LDLR. Through its interaction with nuclear HATs, Tat is potentially able to control the acetylation-dependent cellular gene expression. Modulates the expression of many cellular genes involved in cell survival, proliferation or in coding for cytokines or cytokine receptors. Tat plays a role in T-cell and neurons apoptosis. Tat induced neurotoxicity and apoptosis probably contribute to neuroAIDS. Circulating Tat also acts as a chemokine-like and/or growth factor-like molecule that binds to specific receptors on the surface of the cells, affecting many cellular pathways. In the vascular system, Tat binds to ITGAV/ITGB3 and ITGA5/ITGB1 integrins dimers at the surface of endothelial cells and competes with bFGF for heparin-binding sites, leading to an excess of soluble bFGF. This Human immunodeficiency virus type 1 group M subtype H (isolate VI991) (HIV-1) protein is Protein Tat.